Here is a 166-residue protein sequence, read N- to C-terminus: MRLILLSSLLLLGIFLANGDEVDPDGKVLNSLIYGVMHLQREFANLKGAFLTVHRARSFGSGSERLYVTNKEIKNFEALRQICEQAEGHIPSPQLENQNKAFANVLERHGKEAYLVVGDSANFTNWAAGEPNKAAGTCVKADTHGSWHSASCDDNLLVVCEFYFIL.

An N-terminal signal peptide occupies residues 1 to 19 (MRLILLSSLLLLGIFLANG). A C-type lectin domain is found at 46 to 161 (LKGAFLTVHR…CDDNLLVVCE (116 aa)). 2 disulfides stabilise this stretch: C83–C160 and C138–C152. N122 carries an N-linked (GlcNAc...) asparagine glycan.

The protein belongs to the alpha-type phospholipase A2 inhibitor family. Homotrimer; non-covalently linked. In terms of tissue distribution, expressed by the liver.

It is found in the secreted. In terms of biological role, this phospholipase A2 inhibitor binds directly phospholipase A2 in the presence or absence of calcium. This Bothrops moojeni (Lance-headed viper) protein is Phospholipase A2 inhibitor clone 08.